Reading from the N-terminus, the 520-residue chain is DNA-(apurinic or apyrimidinic site) endonuclease 2 (520 aa).

A Mg(2+)-binding site is contributed by Glu-59. Residue Tyr-181 is part of the active site. 3 residues coordinate Mg(2+): Asp-222, Asn-224, and Asp-353. Asp-222 (proton donor/acceptor) is an active-site residue. The Zn(2+) site is built by Cys-476, His-478, Cys-500, and Cys-514. A GRF-type zinc finger spans residues 476–520 (CRHGEESMLKTSKTSANPGRKFWICKRSRGDSNNTESSCGFFQWV).

The protein belongs to the DNA repair enzymes AP/ExoA family. Mg(2+) is required as a cofactor. The cofactor is Mn(2+).

Its subcellular location is the nucleus. The catalysed reaction is Exonucleolytic cleavage in the 3'- to 5'-direction to yield nucleoside 5'-phosphates.. Functionally, DNA repair enzyme that cleaves apurinic/apyrimidinic (AP) sites and removes 3'-blocking groups present at single strand breaks of damaged DNA. The protein is DNA-(apurinic or apyrimidinic site) endonuclease 2 (APN2) of Saccharomyces cerevisiae (strain ATCC 204508 / S288c) (Baker's yeast).